Consider the following 201-residue polypeptide: 3-isopropylmalate dehydratase small subunit (201 aa).

It belongs to the LeuD family. LeuD type 1 subfamily. Heterodimer of LeuC and LeuD.

The catalysed reaction is (2R,3S)-3-isopropylmalate = (2S)-2-isopropylmalate. It participates in amino-acid biosynthesis; L-leucine biosynthesis; L-leucine from 3-methyl-2-oxobutanoate: step 2/4. In terms of biological role, catalyzes the isomerization between 2-isopropylmalate and 3-isopropylmalate, via the formation of 2-isopropylmaleate. The chain is 3-isopropylmalate dehydratase small subunit from Shewanella frigidimarina (strain NCIMB 400).